We begin with the raw amino-acid sequence, 570 residues long: Formate--tetrahydrofolate ligase (570 aa).

65-72 contacts ATP; sequence TPHGEGKT.

This sequence belongs to the formate--tetrahydrofolate ligase family.

It carries out the reaction (6S)-5,6,7,8-tetrahydrofolate + formate + ATP = (6R)-10-formyltetrahydrofolate + ADP + phosphate. Its pathway is one-carbon metabolism; tetrahydrofolate interconversion. The chain is Formate--tetrahydrofolate ligase from Shewanella oneidensis (strain ATCC 700550 / JCM 31522 / CIP 106686 / LMG 19005 / NCIMB 14063 / MR-1).